The chain runs to 370 residues: Flagellar P-ring protein (370 aa).

Positions 1–21 are cleaved as a signal peptide; the sequence is MRLFSVVLAVFTLLLPSQAFA.

The protein belongs to the FlgI family. As to quaternary structure, the basal body constitutes a major portion of the flagellar organelle and consists of four rings (L,P,S, and M) mounted on a central rod.

Its subcellular location is the periplasm. The protein resides in the bacterial flagellum basal body. In terms of biological role, assembles around the rod to form the L-ring and probably protects the motor/basal body from shearing forces during rotation. The protein is Flagellar P-ring protein of Alteromonas mediterranea (strain DSM 17117 / CIP 110805 / LMG 28347 / Deep ecotype).